The following is a 327-amino-acid chain: MMSKVKTRIYFCGGAGFRIGELFHGYHEDVCYIDTSVQNKHKHNTDDNTIIIEADTKLADQTARKRAIGMGKDRKAAAELISAHIPAIAHHFPAGDTNIVVYSMGGASGSTIGPSLVSHLQQQGEVVVSVVIGSYDSDISLRNSSGSLKTFEGVSSVSKVPMIINYHENVEGIPQSMVNQNILEVLNALVILFNQEHQSLDLMDITNWAHFHKHHDVPVQTVQLHVCFDRQEAQAILDPISIASLYTDPDRDVSISTVLTRTTGYADPEKYDFDQMHFVINGLSIEDIRKRLEERREMMNRAKANMRKRQSTLDVDDQATSSGLVFD.

Residues 14–15 (GA) and 107–109 (ASG) contribute to the GTP site. Residues 303-327 (KANMRKRQSTLDVDDQATSSGLVFD) form a disordered region. Residues 318 to 327 (QATSSGLVFD) show a composition bias toward polar residues.

Belongs to the FtsZ family. PhuZ subfamily. As to quaternary structure, homomultimer. Polymerizes in a strictly GTP-dependent manner.

Its subcellular location is the host cytoplasm. It carries out the reaction GTP + H2O = GDP + phosphate + H(+). With respect to regulation, the non-hydrolyzable GTP analog GMPCPP stabilizes filaments, which never disassemble. A tubulin-like GTPase that forms filaments, which are required for positioning viral DNA and capsids in the middle of the host cell for optimal replication. The motor component of a partition system which pushes phage DNA (encased by protein gp105) to the center of the bacterial host cell. Also required for movement of phage capsids to the vicinity of the viral DNA and rotation of the encased viral DNA at midcell. Forms filaments during the lytic phase, which position phage DNA at the center of the bacterial host cell. Filaments have a three-stranded intertwined architecture and form a spindle-like cytoskeleton within the infected cell. Has GTPase activity. Filaments grow at the plus end and depolymerize at the minus end, a process called treadmilling, and switch from growing in a polar manner to catastrophic depolymerization, i.e. they display dynamic instability, like tubulin. In infected host cells the filament ends close to the cell pole are relatively stable, while the other end near the phage DNA is highly dynamic. Both capsid movement and DNA rotation probably require treadmilling. The chain is Phage tubulin-like protein from Pseudomonas phage phiKZ.